The sequence spans 95 residues: UPF0358 protein BCE_3996 (95 aa).

It belongs to the UPF0358 family.

The polypeptide is UPF0358 protein BCE_3996 (Bacillus cereus (strain ATCC 10987 / NRS 248)).